The sequence spans 851 residues: Protein NUD1 (851 aa).

2 disordered regions span residues 1-31 (MDMDTQEAELSSQLENLTINSPRKLRSNAHS) and 216-352 (LVGS…KAPS). Over residues 8–21 (AELSSQLENLTINS) the composition is skewed to polar residues. Low complexity-rich tracts occupy residues 223–246 (NSNNKNNNNNNNNNNNNSININNK) and 260–278 (SNSFEFSSSSSMSSSQTQS). Positions 291-304 (NTISPGQLGYQFNH) are enriched in polar residues. Residues 320-333 (SSSHSLDNTSSNQS) show a composition bias toward low complexity. Lysine 357 is covalently cross-linked (Glycyl lysine isopeptide (Lys-Gly) (interchain with G-Cter in ubiquitin)). Phosphothreonine occurs at positions 388 and 392. 2 positions are modified to phosphoserine: serine 417 and serine 419. 5 LRR repeats span residues 544 to 566 (DLECLDLSYNLLNTSLKFLSLCH), 567 to 588 (HLQEVNLSYNSIQSLEGIGSSR), 589 to 609 (MKKLNLSNNEINGIIDFEQLI), 621 to 642 (TVEVLDLSNNNIIGVRNINCLP), and 643 to 664 (RLKVLNLNGNPLVSIVESSKME).

As to quaternary structure, interacts directly with MPC54, CNM67, SPO21/MPC70, ADY3 and ADY4. Probable component of a spindle pole boby (SPB) complex composed of ADY3, SSP1, DON1, MPC54, SPO21/MPC70, NUD1 and CNM67. Phosphorylated from S/G2 phase until the end of mitosis.

The protein localises to the cytoplasm. It localises to the cytoskeleton. The protein resides in the microtubule organizing center. Its subcellular location is the spindle pole body. It is found in the nucleus envelope. Functionally, involved in astral microtubule organization by binding SCP72 to the outer plaque in a cell-cycle dependent manner. Required for the mitotic exit by facilitating the binding of TEMP1 to CDC15. Also involved in the pathway that organizes the shaping and sizing of the prospore membrane (PSM) during sporulation. This is Protein NUD1 (NUD1) from Saccharomyces cerevisiae (strain ATCC 204508 / S288c) (Baker's yeast).